We begin with the raw amino-acid sequence, 443 residues long: ATP-dependent protease ATPase subunit HslU (443 aa).

ATP is bound by residues Ile-18, 60–65, Asp-256, Glu-321, and Arg-393; that span reads GVGKTE.

Belongs to the ClpX chaperone family. HslU subfamily. In terms of assembly, a double ring-shaped homohexamer of HslV is capped on each side by a ring-shaped HslU homohexamer. The assembly of the HslU/HslV complex is dependent on binding of ATP.

The protein localises to the cytoplasm. Its function is as follows. ATPase subunit of a proteasome-like degradation complex; this subunit has chaperone activity. The binding of ATP and its subsequent hydrolysis by HslU are essential for unfolding of protein substrates subsequently hydrolyzed by HslV. HslU recognizes the N-terminal part of its protein substrates and unfolds these before they are guided to HslV for hydrolysis. This is ATP-dependent protease ATPase subunit HslU from Pectobacterium atrosepticum (strain SCRI 1043 / ATCC BAA-672) (Erwinia carotovora subsp. atroseptica).